The primary structure comprises 155 residues: FHA domain-containing protein FhaB (155 aa).

A helical transmembrane segment spans residues 6–28 (LQLTRAGFLMLLWVFIWSVLRIL). At Thr36 the chain carries Phosphothreonine. An FHA domain is found at 83 to 132 (VLIGRADDSTLVLTDDYASTRHARLSMRGSEWYVEDLGSTNGTYLDRAKV).

In terms of processing, phosphorylated by PknB. Dephosphorylated by PstP.

It is found in the cell membrane. The chain is FHA domain-containing protein FhaB (fhaB) from Mycobacterium tuberculosis (strain CDC 1551 / Oshkosh).